We begin with the raw amino-acid sequence, 33 residues long: Photosystem II reaction center protein Psb30 (33 aa).

Residues 5–25 (LIGQLVTVALVVGAGPIIIGA) traverse the membrane as a helical segment.

It belongs to the Psb30/Ycf12 family. In terms of assembly, PSII is composed of 1 copy each of membrane proteins PsbA, PsbB, PsbC, PsbD, PsbE, PsbF, PsbH, PsbI, PsbJ, PsbK, PsbL, PsbM, PsbT, PsbX, PsbY, PsbZ, Psb30/Ycf12, peripheral proteins of the oxygen-evolving complex and a large number of cofactors. It forms dimeric complexes.

It localises to the plastid. It is found in the chloroplast thylakoid membrane. In terms of biological role, a core subunit of photosystem II (PSII), probably helps stabilize the reaction center. This chain is Photosystem II reaction center protein Psb30, found in Ostreococcus tauri.